We begin with the raw amino-acid sequence, 80 residues long: Raniseptin-5 (80 aa).

The signal sequence occupies residues methionine 1–cysteine 22. Residues glutamate 23 to glutamate 49 constitute a propeptide that is removed on maturation.

This sequence belongs to the frog skin active peptide (FSAP) family. Dermaseptin subfamily. As to expression, expressed by the skin glands.

The protein localises to the secreted. Its function is as follows. Has antibacterial activity. This chain is Raniseptin-5, found in Boana raniceps (Chaco tree frog).